Reading from the N-terminus, the 118-residue chain is Ribonuclease P protein component (118 aa).

Belongs to the RnpA family. In terms of assembly, consists of a catalytic RNA component (M1 or rnpB) and a protein subunit.

The enzyme catalyses Endonucleolytic cleavage of RNA, removing 5'-extranucleotides from tRNA precursor.. RNaseP catalyzes the removal of the 5'-leader sequence from pre-tRNA to produce the mature 5'-terminus. It can also cleave other RNA substrates such as 4.5S RNA. The protein component plays an auxiliary but essential role in vivo by binding to the 5'-leader sequence and broadening the substrate specificity of the ribozyme. The chain is Ribonuclease P protein component from Rickettsia rickettsii (strain Iowa).